The sequence spans 135 residues: C-type lectin PAL (135 aa).

4 disulfide bridges follow: cysteine 3-cysteine 14, cysteine 31-cysteine 131, cysteine 38-cysteine 133, and cysteine 106-cysteine 123. Residues 10–132 (MNGLCYKIFD…CGSKNAFLCQ (123 aa)) form the C-type lectin domain. 5 residues coordinate Ca(2+): glutamine 96, aspartate 98, glutamate 104, asparagine 119, and aspartate 120. The Galactose-binding motif lies at 96–98 (QPD).

The protein belongs to the true venom lectin family. In terms of assembly, homodimer; disulfide-linked. In terms of tissue distribution, expressed by the venom gland.

The protein localises to the secreted. Its function is as follows. Galactose-binding lectin which recognizes specific carbohydrate structures and agglutinates a variety of animal cells by binding to cell-surface glycoproteins and glycolipids. This is a calcium-dependent lectin. Shows high hemagglutinating activity (MHC is 0.25 ug/ml on rabbit erythrocytes). The polypeptide is C-type lectin PAL (Bitis arietans (African puff adder)).